The following is a 428-amino-acid chain: Gamma-glutamyl phosphate reductase (428 aa).

It belongs to the gamma-glutamyl phosphate reductase family.

Its subcellular location is the cytoplasm. The enzyme catalyses L-glutamate 5-semialdehyde + phosphate + NADP(+) = L-glutamyl 5-phosphate + NADPH + H(+). The protein operates within amino-acid biosynthesis; L-proline biosynthesis; L-glutamate 5-semialdehyde from L-glutamate: step 2/2. Functionally, catalyzes the NADPH-dependent reduction of L-glutamate 5-phosphate into L-glutamate 5-semialdehyde and phosphate. The product spontaneously undergoes cyclization to form 1-pyrroline-5-carboxylate. This Treponema pallidum (strain Nichols) protein is Gamma-glutamyl phosphate reductase.